Reading from the N-terminus, the 261-residue chain is Ribosomal RNA small subunit methyltransferase A (261 aa).

The S-adenosyl-L-methionine site is built by Asn-11, Leu-13, Gly-38, Glu-59, Asp-84, and Ser-106.

This sequence belongs to the class I-like SAM-binding methyltransferase superfamily. rRNA adenine N(6)-methyltransferase family. RsmA subfamily.

The protein resides in the cytoplasm. It catalyses the reaction adenosine(1518)/adenosine(1519) in 16S rRNA + 4 S-adenosyl-L-methionine = N(6)-dimethyladenosine(1518)/N(6)-dimethyladenosine(1519) in 16S rRNA + 4 S-adenosyl-L-homocysteine + 4 H(+). Specifically dimethylates two adjacent adenosines (A1518 and A1519) in the loop of a conserved hairpin near the 3'-end of 16S rRNA in the 30S particle. May play a critical role in biogenesis of 30S subunits. The polypeptide is Ribosomal RNA small subunit methyltransferase A (Wigglesworthia glossinidia brevipalpis).